Here is a 115-residue protein sequence, read N- to C-terminus: Salivary anti-complement protein (115 aa).

The N-terminal stretch at 1-22 (MKFFYLIFSAIFFLADPALVKC) is a signal peptide. 3 disulfides stabilise this stretch: Cys26-Cys108, Cys41-Cys92, and Cys83-Cys101.

May form multimers. Salivary gland (at protein level).

It localises to the secreted. In terms of biological role, salivary protein that inhibits the classical pathway of complement system activation in the host while having no inhibitory effect on the alternative or lectin pathways. Prevent cleavage of host C4 and consequently impairs the activation of factors downstream of C4b in the complement cascade. This is Salivary anti-complement protein from Lutzomyia longipalpis (Sand fly).